An 87-amino-acid polypeptide reads, in one-letter code: Developmentally-regulated ectodermal protein (87 aa).

The N-terminal stretch at 1 to 16 (MKRLLVLTLVSAILMA) is a signal peptide.

This Tripneustes gratilla (Hawaian sea urchin) protein is Developmentally-regulated ectodermal protein.